The primary structure comprises 213 residues: Large ribosomal subunit protein uL3 (213 aa).

Belongs to the universal ribosomal protein uL3 family. In terms of assembly, part of the 50S ribosomal subunit. Forms a cluster with proteins L14 and L19.

In terms of biological role, one of the primary rRNA binding proteins, it binds directly near the 3'-end of the 23S rRNA, where it nucleates assembly of the 50S subunit. This Bifidobacterium adolescentis (strain ATCC 15703 / DSM 20083 / NCTC 11814 / E194a) protein is Large ribosomal subunit protein uL3.